The primary structure comprises 446 residues: Ribulose bisphosphate carboxylase large chain (446 aa).

Positions 89 and 139 each coordinate substrate. The Proton acceptor role is filled by lysine 141. Residue lysine 143 participates in substrate binding. Mg(2+) contacts are provided by lysine 167, aspartate 169, and glutamate 170. Lysine 167 is modified (N6-carboxylysine). Catalysis depends on histidine 260, which acts as the Proton acceptor. Substrate is bound by residues arginine 261, histidine 293, and serine 345.

The protein belongs to the RuBisCO large chain family. Type I subfamily. As to quaternary structure, heterohexadecamer of 8 large chains and 8 small chains; disulfide-linked. The disulfide link is formed within the large subunit homodimers. Mg(2+) is required as a cofactor. The disulfide bond which can form in the large chain dimeric partners within the hexadecamer appears to be associated with oxidative stress and protein turnover.

It localises to the plastid. It is found in the chloroplast. The enzyme catalyses 2 (2R)-3-phosphoglycerate + 2 H(+) = D-ribulose 1,5-bisphosphate + CO2 + H2O. The catalysed reaction is D-ribulose 1,5-bisphosphate + O2 = 2-phosphoglycolate + (2R)-3-phosphoglycerate + 2 H(+). Functionally, ruBisCO catalyzes two reactions: the carboxylation of D-ribulose 1,5-bisphosphate, the primary event in carbon dioxide fixation, as well as the oxidative fragmentation of the pentose substrate in the photorespiration process. Both reactions occur simultaneously and in competition at the same active site. This chain is Ribulose bisphosphate carboxylase large chain, found in Exacum affine (Persian violet).